Reading from the N-terminus, the 229-residue chain is Cytochrome c oxidase subunit 2 (229 aa).

Topologically, residues Met-1 to His-26 are mitochondrial intermembrane. The helical transmembrane segment at Ala-27–Asn-48 threads the bilayer. Residues Ser-49–Glu-62 are Mitochondrial matrix-facing. Residues Met-63–Arg-82 traverse the membrane as a helical segment. At Leu-83 to Ser-229 the chain is on the mitochondrial intermembrane side. Positions 161, 196, 198, 200, 204, and 207 each coordinate Cu cation. Residue Glu-198 participates in Mg(2+) binding.

This sequence belongs to the cytochrome c oxidase subunit 2 family. In terms of assembly, component of the cytochrome c oxidase (complex IV, CIV), a multisubunit enzyme composed of a catalytic core of 3 subunits and several supernumerary subunits. The complex exists as a monomer or a dimer and forms supercomplexes (SCs) in the inner mitochondrial membrane with ubiquinol-cytochrome c oxidoreductase (cytochrome b-c1 complex, complex III, CIII). It depends on Cu cation as a cofactor.

It is found in the mitochondrion inner membrane. The catalysed reaction is 4 Fe(II)-[cytochrome c] + O2 + 8 H(+)(in) = 4 Fe(III)-[cytochrome c] + 2 H2O + 4 H(+)(out). Component of the cytochrome c oxidase, the last enzyme in the mitochondrial electron transport chain which drives oxidative phosphorylation. The respiratory chain contains 3 multisubunit complexes succinate dehydrogenase (complex II, CII), ubiquinol-cytochrome c oxidoreductase (cytochrome b-c1 complex, complex III, CIII) and cytochrome c oxidase (complex IV, CIV), that cooperate to transfer electrons derived from NADH and succinate to molecular oxygen, creating an electrochemical gradient over the inner membrane that drives transmembrane transport and the ATP synthase. Cytochrome c oxidase is the component of the respiratory chain that catalyzes the reduction of oxygen to water. Electrons originating from reduced cytochrome c in the intermembrane space (IMS) are transferred via the dinuclear copper A center (CU(A)) of subunit 2 and heme A of subunit 1 to the active site in subunit 1, a binuclear center (BNC) formed by heme A3 and copper B (CU(B)). The BNC reduces molecular oxygen to 2 water molecules using 4 electrons from cytochrome c in the IMS and 4 protons from the mitochondrial matrix. The chain is Cytochrome c oxidase subunit 2 (mt:CoII) from Drosophila subobscura (Fruit fly).